The primary structure comprises 506 residues: Anaerobic nitric oxide reductase transcription regulator NorR (506 aa).

The residue at position 57 (aspartate 57) is a 4-aspartylphosphate. In terms of domain architecture, Sigma-54 factor interaction spans 187–416 (MIGLSPAMTQ…LEHAIHRAVV (230 aa)). ATP is bound by residues 215–222 (GETGTGKE) and 278–287 (ADNGTLFLDE). A DNA-binding region (H-T-H motif) is located at residues 481-500 (WAASARALETDVANLHRLAK).

It functions in the pathway nitrogen metabolism; nitric oxide reduction. Its function is as follows. Required for the expression of anaerobic nitric oxide (NO) reductase, acts as a transcriptional activator for at least the norVW operon. Activation also requires sigma-54. The sequence is that of Anaerobic nitric oxide reductase transcription regulator NorR from Salmonella schwarzengrund (strain CVM19633).